A 115-amino-acid polypeptide reads, in one-letter code: MKVVAAYLLAVLSGKASPTSADIKTILGSVGAETEDSQIELLLKEVKGKDLAELIAAGREKLASVPSGGGGGVAVASATSGGGGGGGASAAESKKEEKKEEKEESDDDMGFSLFE.

Positions 63–115 (ASVPSGGGGGVAVASATSGGGGGGGASAAESKKEEKKEEKEESDDDMGFSLFE) are disordered. Basic and acidic residues predominate over residues 92-102 (ESKKEEKKEEK). Position 105 is a phosphoserine (serine 105).

The protein belongs to the eukaryotic ribosomal protein P1/P2 family. P1 and P2 exist as dimers at the large ribosomal subunit. Phosphorylated.

Functionally, plays an important role in the elongation step of protein synthesis. The protein is Large ribosomal subunit protein P2y (RPP2B) of Arabidopsis thaliana (Mouse-ear cress).